The primary structure comprises 1224 residues: Serine/threonine-protein kinase CST20 (1224 aa).

Residues 1-18 (MSILSENNPTPTSITDPN) show a composition bias toward polar residues. 2 disordered regions span residues 1–378 (MSIL…TAHN) and 403–464 (TNSS…HSQE). Composition is skewed to low complexity over residues 57-70 (NTTS…SLGS) and 95-119 (DSGS…NPES). A compositionally biased stretch (basic and acidic residues) spans 144–155 (HQGDDSDNEKQY). 3 stretches are compositionally biased toward polar residues: residues 169–191 (DSYS…NNVS), 201–218 (TSSL…NENA), and 231–240 (PTSKTSSFHD). Residues 242-251 (SSVISSSTSV) show a composition bias toward low complexity. 2 stretches are compositionally biased toward polar residues: residues 256–271 (SNPT…SYKS) and 305–324 (DTLS…TLQG). Low complexity-rich tracts occupy residues 343–375 (NTSA…STST) and 433–462 (KVRG…NSHS). A CRIB domain is found at 469–482 (ISTPFNAKHLAHVG). Disordered stretches follow at residues 539–825 (FHFD…ALAD) and 861–913 (LREK…KQAA). The span at 544 to 555 (NKSSSSGWSNEN) shows a compositional bias: polar residues. Gly residues predominate over residues 564–575 (SNSGSGSGGGGA). Residues 598 to 607 (ITPSQSMPTK) are compositionally biased toward polar residues. Over residues 608–622 (TESKQSENQHPHEDN) the composition is skewed to basic and acidic residues. Residues 623-636 (ATQYTPRTPTSHVQ) are compositionally biased toward polar residues. Low complexity-rich tracts occupy residues 664–677 (PSSQ…SQSD), 690–704 (SPSK…SKSL), and 730–743 (SIPK…SLSS). The segment covering 744-755 (QLRPATNGSTTA) has biased composition (polar residues). Residues 783–801 (APPPPPSAPPAPPVPPAPP) show a composition bias toward pro residues. Over residues 805 to 820 (LSEQTSEIPQQRTAPS) the composition is skewed to polar residues. The span at 861 to 870 (LREKNERQNR) shows a compositional bias: basic and acidic residues. Over residues 871 to 886 (QQETGQNNADTASGGS) the composition is skewed to polar residues. Residues 947-1199 (YVDLVKIGQG…ADELLHDNFI (253 aa)) form the Protein kinase domain. ATP is bound by residues 953–961 (IGQGASGGV) and K977. The active-site Proton acceptor is the D1067.

The protein belongs to the protein kinase superfamily. STE Ser/Thr protein kinase family. STE20 subfamily.

It is found in the cytoplasm. Its subcellular location is the nucleus. It carries out the reaction L-seryl-[protein] + ATP = O-phospho-L-seryl-[protein] + ADP + H(+). The catalysed reaction is L-threonyl-[protein] + ATP = O-phospho-L-threonyl-[protein] + ADP + H(+). Its function is as follows. MAP4K component of the MAPK pathway required for the mating pheromone response, and the regulation of cell polarity and cell cycle. Phosphorylates histone H2B to form H2BS10ph. Required for hyphal formation and virulence. In Candida albicans (strain WO-1) (Yeast), this protein is Serine/threonine-protein kinase CST20 (CST20).